The following is a 228-amino-acid chain: DNA mismatch repair protein MutH (228 aa).

Belongs to the MutH family.

Its subcellular location is the cytoplasm. Sequence-specific endonuclease that cleaves unmethylated GATC sequences. It is involved in DNA mismatch repair. The protein is DNA mismatch repair protein MutH of Yersinia pseudotuberculosis serotype IB (strain PB1/+).